Reading from the N-terminus, the 264-residue chain is Teichoic acids export ATP-binding protein TagH (264 aa).

The ABC transporter domain occupies 24–243 (IKDALIPKNK…YEQFLKDFKK (220 aa)). 57–64 (GINGSGKS) contributes to the ATP binding site.

Belongs to the ABC transporter superfamily. Teichoic acids exporter (TC 3.A.1.104.1) family. In terms of assembly, the complex is composed of two ATP-binding proteins (TagH) and two transmembrane proteins (TagG).

It is found in the cell membrane. The enzyme catalyses ATP + H2O + teichoic acidSide 1 = ADP + phosphate + teichoic acidSide 2.. Functionally, part of the ABC transporter complex TagGH involved in teichoic acids export. Responsible for energy coupling to the transport system. This is Teichoic acids export ATP-binding protein TagH from Staphylococcus haemolyticus (strain JCSC1435).